A 125-amino-acid chain; its full sequence is Ribonuclease P protein component 1 (125 aa).

Over residues 1–13 (MRRNGKEGKDRAP) the composition is skewed to basic and acidic residues. The tract at residues 1-24 (MRRNGKEGKDRAPGRPQRKGQEVA) is disordered.

It belongs to the eukaryotic/archaeal RNase P protein component 1 family. As to quaternary structure, consists of a catalytic RNA component and at least 4-5 protein subunits.

The protein resides in the cytoplasm. The enzyme catalyses Endonucleolytic cleavage of RNA, removing 5'-extranucleotides from tRNA precursor.. Functionally, part of ribonuclease P, a protein complex that generates mature tRNA molecules by cleaving their 5'-ends. The chain is Ribonuclease P protein component 1 from Thermococcus onnurineus (strain NA1).